The chain runs to 74 residues: Kappa-stichotoxin-Hmg1a (74 aa).

The first 22 residues, 1–22 (MKSQMIAAVLLIAFCLCVVVTA), serve as a signal peptide directing secretion. Residues 23–39 (RMELQDVEDMENGFQKR) constitute a propeptide that is removed on maturation. The region spanning 42–74 (CKDLIPVSECTDIRCRTSMKYRLNLCRKTCGSC) is the ShKT domain. Intrachain disulfides connect C42/C74, C51/C67, and C56/C71.

It belongs to the sea anemone type 1 potassium channel toxin family. Type 1a subfamily.

It is found in the secreted. It localises to the nematocyst. Functionally, potently blocks the voltage-gated potassium channel Kv1.1/KCNA1 (Ki=75 pM), KcsA (Ki~1 nM) and moderately blocks Kv1.2/KCNA2 (Ki=2.5 nM) and Kv1.3/KCNA3 (Ki=3.1 nM). Also facilitates acetylcholine release at the avian neuromuscular junction. Blockade and dissociation rate are sensitive to voltage. The sequence is that of Kappa-stichotoxin-Hmg1a from Heteractis magnifica (Magnificent sea anemone).